We begin with the raw amino-acid sequence, 4699 residues long: Fat-like cadherin-related tumor suppressor homolog (4699 aa).

The signal sequence occupies residues 1–38 (MFTMKIKKYVTPVKRKAFTILQWISLLCSLWLIPTVQS). Topologically, residues 39-4285 (KADEKHTATL…KNFSIEHISG (4247 aa)) are extracellular. Cadherin domains lie at 63–183 (SHSV…SPLF), 184–291 (YPTQ…APEI), 288–400 (APEI…IPIF), 401–507 (TQEI…DPIF), 508–613 (ENVN…RPQF), 614–716 (ERVN…SSIL), 773–877 (VNFP…RPVI), 878–980 (QKTL…APVF), 981–1088 (GVQE…APEF), 1089–1198 (DDFV…KPVY), 1194–1299 (DKPV…SPEF), 1300–1405 (DQRV…APLI), 1408–1506 (KTSE…PPQF), 1507–1612 (AKDV…HPEF), 1613–1717 (TAKI…PPKF), 1718–1815 (PTNN…IPYF), 1816–1932 (VQNE…PPVF), 1933–2033 (NERE…NFAF), 2034–2140 (QRES…CPLF), 2141–2241 (VNMP…MPVF), 2242–2341 (EKQF…YPEI), 2342–2449 (ESDI…APCF), 2450–2551 (VEPS…SPLF), 2552–2654 (DQST…VPYF), 2655–2763 (LLKE…IPTF), 2764–2860 (EKSS…YPKF), 2861–2967 (DNTF…APVF), 2968–3072 (KLPI…KPRY), 3068–3169 (LKPR…MPIF), 3170–3273 (SMAQ…PPEF), 3274–3378 (SMRQ…SPTF), 3379–3483 (LQNL…APIF), 3484–3588 (SSSN…PPIV), and 3589–3696 (TPLE…VIRF). N-linked (GlcNAc...) asparagine glycans are attached at residues Asn-68 and Asn-159. A glycan (N-linked (GlcNAc...) asparagine) is linked at Asn-367. 3 N-linked (GlcNAc...) asparagine glycosylation sites follow: Asn-782, Asn-846, and Asn-926. Asn-1109, Asn-1201, Asn-1315, Asn-1442, Asn-1476, and Asn-1514 each carry an N-linked (GlcNAc...) asparagine glycan. Intrachain disulfides connect Cys-3807/Cys-3819, Cys-3814/Cys-3851, Cys-3853/Cys-3862, Cys-3869/Cys-3880, Cys-3874/Cys-3891, Cys-3893/Cys-3902, Cys-4071/Cys-4105, Cys-4117/Cys-4128, Cys-4122/Cys-4138, Cys-4140/Cys-4149, Cys-4156/Cys-4167, Cys-4161/Cys-4177, Cys-4179/Cys-4188, Cys-4194/Cys-4205, Cys-4199/Cys-4214, Cys-4216/Cys-4224, Cys-4231/Cys-4242, Cys-4236/Cys-4251, and Cys-4253/Cys-4262. The 39-residue stretch at 3865–3903 (TVNACSTDPCSPQRICMPSGSALGYQCVCPKGFSGTYCE) folds into the EGF-like 1 domain. One can recognise a Laminin G-like domain in the interval 3921–4105 (AVSFGGKSYA…KRFTNVEFKC (185 aa)). 4 consecutive EGF-like domains span residues 4113–4150 (RLGICGSQPCANSGICKELDTDVFECACQPRYSGKHCE), 4152–4189 (DLDPCSSGPCLFGGRCDYHGPNNYSCTCPIHLSGKRCE), 4190–4225 (YGKFCTPNPCKNGGICEEGDGISHCMCRGYTGPTCE), and 4227–4263 (DVDECENQPCGNGATCINEPGSFRCICPSYLTGASCG). Residues 4286 to 4306 (IISGVAVVLVIISCVLCCVVL) form a helical membrane-spanning segment. At 4307-4699 (KRSSSSKRRN…EFLPQQQTNN (393 aa)) the chain is on the cytoplasmic side.

As to expression, localizes where basal actin filaments terminate.

The protein localises to the cell membrane. Functionally, required for the planar polarity of actin filament orientation at the basal side of ovarian follicle cells. Required for proper egg chamber shape and elongation of the egg chamber during oogenesis. Required for the correct planar polarization of Rab10 within the basal follicle cell epithelium and is therefore indirectly involved in the Rab10-dependent remodeling of the basal membrane during egg chamber elongation. This Drosophila melanogaster (Fruit fly) protein is Fat-like cadherin-related tumor suppressor homolog (kug).